Reading from the N-terminus, the 343-residue chain is Protein pelota homolog (343 aa).

This sequence belongs to the eukaryotic release factor 1 family. Pelota subfamily. In terms of assembly, monomer. A divalent metal cation is required as a cofactor.

The protein localises to the cytoplasm. Functionally, may function in recognizing stalled ribosomes, interact with stem-loop structures in stalled mRNA molecules, and effect endonucleolytic cleavage of the mRNA. May play a role in the release non-functional ribosomes and degradation of damaged mRNAs. Has endoribonuclease activity. The polypeptide is Protein pelota homolog (Cenarchaeum symbiosum (strain A)).